Reading from the N-terminus, the 116-residue chain is Probable non-functional immunoglobulin kappa variable 3-7 (116 aa).

Positions 1 to 21 (MEAPAQLLFLLLLWLPDTTRE) are cleaved as a signal peptide. The tract at residues 21–43 (EIVMTQSPPTLSLSPGERVTLSC) is framework-1. Residues 22–116 (IVMTQSPPTL…YYCQQDYNLP (95 aa)) enclose the Ig-like domain. A disulfide bridge links cysteine 43 with cysteine 109. A complementarity-determining-1 region spans residues 44–55 (RASQSVSSSYLT). The interval 56 to 70 (WYQQKPGQAPRLLIY) is framework-2. Positions 71 to 77 (GASTRAT) are complementarity-determining-2. Positions 78-109 (SIPARFSGSGSGTDFTLTISSLQPEDFAVYYC) are framework-3. Residues 110–116 (QQDYNLP) form a complementarity-determining-3 region.

Immunoglobulins are composed of two identical heavy chains and two identical light chains; disulfide-linked.

The protein resides in the secreted. It is found in the cell membrane. Its function is as follows. Probable non-functional open reading frame (ORF) of V region of the variable domain of immunoglobulin light chains. Non-functional ORF generally cannot participate in the synthesis of a productive immunoglobulin chain due to altered V-(D)-J or switch recombination and/or splicing site (at mRNA level) and/or conserved amino acid change (protein level). Immunoglobulins, also known as antibodies, are membrane-bound or secreted glycoproteins produced by B lymphocytes. In the recognition phase of humoral immunity, the membrane-bound immunoglobulins serve as receptors which, upon binding of a specific antigen, trigger the clonal expansion and differentiation of B lymphocytes into immunoglobulins-secreting plasma cells. Secreted immunoglobulins mediate the effector phase of humoral immunity, which results in the elimination of bound antigens. The antigen binding site is formed by the variable domain of one heavy chain, together with that of its associated light chain. Thus, each immunoglobulin has two antigen binding sites with remarkable affinity for a particular antigen. The variable domains are assembled by a process called V-(D)-J rearrangement and can then be subjected to somatic hypermutations which, after exposure to antigen and selection, allow affinity maturation for a particular antigen. The protein is Probable non-functional immunoglobulin kappa variable 3-7 of Homo sapiens (Human).